Here is a 263-residue protein sequence, read N- to C-terminus: Taurine import ATP-binding protein TauB (263 aa).

Residues 4-235 (LTAEAISLSF…RYAAGETVRS (232 aa)) form the ABC transporter domain. 40-47 (GPSGCGKS) is an ATP binding site.

It belongs to the ABC transporter superfamily. Taurine importer (TC 3.A.1.17.1) family. The complex is composed of two ATP-binding proteins (TauB), two transmembrane proteins (TauC) and a solute-binding protein (TauA).

It localises to the cell inner membrane. It carries out the reaction taurine(out) + ATP + H2O = taurine(in) + ADP + phosphate + H(+). Functionally, part of the ABC transporter complex TauABC involved in taurine import. Responsible for energy coupling to the transport system. This is Taurine import ATP-binding protein TauB from Pseudomonas aeruginosa (strain ATCC 15692 / DSM 22644 / CIP 104116 / JCM 14847 / LMG 12228 / 1C / PRS 101 / PAO1).